The primary structure comprises 189 residues: Interferon alpha-1 (189 aa).

An N-terminal signal peptide occupies residues methionine 1 to glycine 23. Cystine bridges form between cysteine 24-cysteine 122 and cysteine 52-cysteine 162.

Belongs to the alpha/beta interferon family. In terms of assembly, interacts with CR2.

Its subcellular location is the secreted. Functionally, produced by macrophages, IFN-alpha have antiviral activities. Interferon stimulates the production of two enzymes: a protein kinase and an oligoadenylate synthetase. The polypeptide is Interferon alpha-1 (Sus scrofa (Pig)).